Reading from the N-terminus, the 105-residue chain is SH3 domain-binding glutamic acid-rich-like protein 2 (105 aa).

The SH3-binding signature appears at 61–67; that stretch reads KGNPLPP.

This sequence belongs to the SH3BGR family.

It is found in the nucleus. This Danio rerio (Zebrafish) protein is SH3 domain-binding glutamic acid-rich-like protein 2 (sh3bgrl2).